A 160-amino-acid polypeptide reads, in one-letter code: SsrA-binding protein (160 aa).

Positions 131-160 (KKEYDKRDTERERDAGRELQRAVRNKGKED) are disordered.

It belongs to the SmpB family.

Its subcellular location is the cytoplasm. Functionally, required for rescue of stalled ribosomes mediated by trans-translation. Binds to transfer-messenger RNA (tmRNA), required for stable association of tmRNA with ribosomes. tmRNA and SmpB together mimic tRNA shape, replacing the anticodon stem-loop with SmpB. tmRNA is encoded by the ssrA gene; the 2 termini fold to resemble tRNA(Ala) and it encodes a 'tag peptide', a short internal open reading frame. During trans-translation Ala-aminoacylated tmRNA acts like a tRNA, entering the A-site of stalled ribosomes, displacing the stalled mRNA. The ribosome then switches to translate the ORF on the tmRNA; the nascent peptide is terminated with the 'tag peptide' encoded by the tmRNA and targeted for degradation. The ribosome is freed to recommence translation, which seems to be the essential function of trans-translation. The sequence is that of SsrA-binding protein from Pseudomonas fluorescens (strain Pf0-1).